The sequence spans 634 residues: Kelch-like protein 22 (634 aa).

N-acetylalanine is present on Ala2. The BTB domain maps to 50–117; sequence FDVVLVVEGR…IYTSELELSL (68 aa). Kelch repeat units lie at residues 299–349, 350–399, 400–446, 448–493, 494–544, and 545–593; these read CVVG…VLNN, FVYL…VVGR, YIYA…TLEG, MYIT…TLLN, KLYV…VLDN, and RIYV…VLTL. A Phosphothreonine modification is found at Thr463. The residue at position 466 (Tyr466) is a Phosphotyrosine. A Phosphothreonine modification is found at Thr475. The interval 600–634 is disordered; that stretch reads EPPRGTPDRSQADPDFASEVMSVSDWEEFDNSSED. The residue at position 605 (Thr605) is a Phosphothreonine. Residues 624-634 show a composition bias toward acidic residues; it reads DWEEFDNSSED.

In terms of assembly, component of the BCR(KLHL22) E3 ubiquitin ligase complex, at least composed of CUL3, KLHL22 and RBX1. Interacts with PLK1. Interacts with DEPDC5 (via DEP domain); the interaction depends on amino acid availability. Interacts with YWHAE; required for the nuclear localization of KLHL22 upon amino acid starvation.

Its subcellular location is the cytoplasm. The protein localises to the cytosol. It is found in the cytoskeleton. The protein resides in the microtubule organizing center. It localises to the centrosome. Its subcellular location is the spindle. The protein localises to the nucleus. It is found in the lysosome. It participates in protein modification; protein ubiquitination. Substrate-specific adapter of a BCR (BTB-CUL3-RBX1) E3 ubiquitin ligase complex required for chromosome alignment and localization of PLK1 at kinetochores. The BCR(KLHL22) ubiquitin ligase complex mediates monoubiquitination of PLK1, leading to PLK1 dissociation from phosphoreceptor proteins and subsequent removal from kinetochores, allowing silencing of the spindle assembly checkpoint (SAC) and chromosome segregation. Monoubiquitination of PLK1 does not lead to PLK1 degradation. The BCR(KLHL22) ubiquitin ligase complex is also responsible for the amino acid-stimulated 'Lys-48' polyubiquitination and proteasomal degradation of DEPDC5. Through the degradation of DEPDC5, releases the GATOR1 complex-mediated inhibition of the TORC1 pathway. It is therefore an amino acid-dependent activator within the amino acid-sensing branch of the TORC1 pathway, indirectly regulating different cellular processes including cell growth and autophagy. The chain is Kelch-like protein 22 from Homo sapiens (Human).